A 475-amino-acid polypeptide reads, in one-letter code: Ataxin-10 (475 aa).

Arg10 is subject to Omega-N-methylarginine. The residue at position 12 (Ser12) is a Phosphoserine; by AURKB. Ser77 carries the phosphoserine; by PLK1 modification. Phosphothreonine; by PLK1 is present on Thr82. Ser430 carries the post-translational modification Phosphoserine.

It belongs to the ataxin-10 family. In terms of assembly, homooligomer. Interacts with GNB2. Interacts with IQCB1. Interacts with OGT. Polyubiquitinated. In terms of processing, phosphorylation at Ser-12 by AURKB promotes the association of ATXN10 with PLK1. Phosphorylation at Ser-77 and Thr-82 by PLK1 may play a role in the regulation of cytokinesis and may stimulate the proteasome-mediated degradation of ATXN10. In terms of tissue distribution, expressed in the central nervous system.

It localises to the cytoplasm. It is found in the perinuclear region. The protein resides in the midbody. The protein localises to the cytoskeleton. Its subcellular location is the cilium basal body. It localises to the microtubule organizing center. It is found in the centrosome. The protein resides in the centriole. In terms of biological role, may play a role in the regulation of cytokinesis. May play a role in signaling by stimulating protein glycosylation. Induces neuritogenesis by activating the Ras-MAP kinase pathway and is necessary for the survival of cerebellar neurons. Does not appear to play a major role in ciliogenesis. The protein is Ataxin-10 (ATXN10) of Homo sapiens (Human).